A 640-amino-acid polypeptide reads, in one-letter code: Probable inactive receptor kinase At3g08680 (640 aa).

The signal sequence occupies residues 1 to 22 (MMKIIAAFLFLLVTTFVSRCLS). 5 LRR repeats span residues 93-115 (ALRI…ILSL), 117-138 (FIRS…VLSH), 139-162 (RLVN…QNLT), 163-185 (QLTD…PPRL), and 186-206 (KYLN…VKSF). Residues 222 to 249 (LTPCPENTTAPSPSPTTPTEGPGTTNIG) are disordered. Positions 226-247 (PENTTAPSPSPTTPTEGPGTTN) are enriched in low complexity. The chain crosses the membrane as a helical span at residues 260 to 280 (GAIVGIAVGGSVLLFIILAII). Residues 289–315 (DGGQDSTAVPKAKPGRSDNKAEEFGSG) form a disordered region. Positions 341–614 (RASAEVLGKG…EEVVNMMEEI (274 aa)) constitute a Protein kinase domain. S343 carries the phosphoserine modification. Position 347-355 (347-355 (LGKGSYGTT)) interacts with ATP. T364 is modified (phosphothreonine). ATP is bound at residue K369. Phosphothreonine occurs at positions 441, 514, and 564. Residues 612-640 (EEIRPSGSGPGSGNRASSPEMIRSSDSPV) are disordered.

The protein belongs to the protein kinase superfamily. Tyr protein kinase family.

It localises to the membrane. The protein is Probable inactive receptor kinase At3g08680 of Arabidopsis thaliana (Mouse-ear cress).